Reading from the N-terminus, the 244-residue chain is uncharacterized protein (244 aa).

This is an uncharacterized protein from Sulfolobus spindle-shape virus 1 (SSV1).